The following is a 98-amino-acid chain: Defensin (98 aa).

Residues 1–19 (MRTFLVTFVLVVVVGVISA) form the signal peptide. Residues 20-58 (YPSNPVEVEAEDFDAQDPDLQTFQDTFYEVPQVHSRQKR) constitute a propeptide that is removed on maturation. Cystine bridges form between cysteine 61-cysteine 88, cysteine 74-cysteine 94, and cysteine 78-cysteine 96.

Is synthesized by the fat body and eventually secreted into the hemolymph.

It localises to the secreted. Its function is as follows. Has antiparasitic activity against promastigote forms of L.major, and antibacterial activity against Gram-positive bacterium S.aureus. Has antifungal activity against the yeasts C.albicans and S.cerevisiae, but not C.glabrata. Has antifungal activity against filamentous fungi A.fumigatus, F.culmorum, F.oxysporum, N.crassa, T.viride and T.mentagrophytes, but not B.bassiana. The polypeptide is Defensin (Phlebotomus duboscqi (Sandfly)).